A 225-amino-acid polypeptide reads, in one-letter code: C-reactive protein (225 aa).

A signal peptide spans 1-19 (MEKLLWCSLVMIGFSQAFA). Gln-20 bears the Pyrrolidone carboxylic acid mark. The 202-residue stretch at 24–225 (SKTAFVFPKE…DVFIKPQLWP (202 aa)) folds into the Pentraxin (PTX) domain. A disulfide bridge links Cys-55 with Cys-116. Positions 80, 157, 158, 159, and 169 each coordinate Ca(2+).

The protein belongs to the pentraxin family. As to quaternary structure, homopentamer. Pentraxin (or pentaxin) have a discoid arrangement of 5 non-covalently bound subunits. Interacts with FCN1; may regulate monocyte activation by FCN1. Ca(2+) is required as a cofactor. In terms of tissue distribution, found in plasma.

It localises to the secreted. In terms of biological role, displays several functions associated with host defense: it promotes agglutination, bacterial capsular swelling, phagocytosis and complement fixation through its calcium-dependent binding to phosphorylcholine. Can interact with DNA and histones and may scavenge nuclear material released from damaged circulating cells. The polypeptide is C-reactive protein (CRP) (Mesocricetus auratus (Golden hamster)).